The primary structure comprises 228 residues: Thermonuclease (228 aa).

The signal sequence occupies residues 1-23; sequence MTEYLLSAGICMAIVSILLIGMA. The propeptide occupies 24–60; the sequence is ISNVSKGQYAKRFFFFATSCLVLTLVVVSSLSSSANA. The segment covering 58–70 has biased composition (polar residues); that stretch reads ANASQTDNGVNRS. Residues 58 to 83 form a disordered region; that stretch reads ANASQTDNGVNRSGSEDPTVYSATST. Aspartate 100 provides a ligand contact to Ca(2+). Residue arginine 114 is part of the active site. The Ca(2+) site is built by aspartate 119 and threonine 120. Residues glutamate 122 and arginine 166 contribute to the active site.

It belongs to the thermonuclease family. Ca(2+) is required as a cofactor.

Its subcellular location is the secreted. It catalyses the reaction Endonucleolytic cleavage to nucleoside 3'-phosphates and 3'-phosphooligonucleotide end-products.. In terms of biological role, enzyme that catalyzes the hydrolysis of both DNA and RNA at the 5' position of the phosphodiester bond. This is Thermonuclease (nuc) from Staphylococcus aureus (strain Mu50 / ATCC 700699).